The primary structure comprises 221 residues: MTGKKAVVILSGGLDSTTCMGVGKEAGYELYPISFHYGQRHDREIENAKKVASYFNVTEHKVFSLEFLKEIGGSSLTDQSMEVSQEGVGEDVPNTYVPGRNTIFLSIAASYAEAIGAEKIYVGVSAVDYSGYPDCRPEFIEAMQQTIYQGTNANPAMTIEAPLIDLSKGDTVKLGMKLNVPYHLTTSCYLGGEEACGECDSCRLRLQGFEEAGATDPIKYM.

10-20 (LSGGLDSTTCM) contributes to the ATP binding site. 4 residues coordinate Zn(2+): C188, C196, C199, and C202.

This sequence belongs to the QueC family. As to quaternary structure, homodimer. Zn(2+) serves as cofactor.

It catalyses the reaction 7-carboxy-7-deazaguanine + NH4(+) + ATP = 7-cyano-7-deazaguanine + ADP + phosphate + H2O + H(+). Its pathway is purine metabolism; 7-cyano-7-deazaguanine biosynthesis. Its function is as follows. Catalyzes the ATP-dependent conversion of 7-carboxy-7-deazaguanine (CDG) to 7-cyano-7-deazaguanine (preQ(0)). This is 7-cyano-7-deazaguanine synthase from Oceanobacillus iheyensis (strain DSM 14371 / CIP 107618 / JCM 11309 / KCTC 3954 / HTE831).